A 300-amino-acid polypeptide reads, in one-letter code: Ribosomal RNA small subunit methyltransferase H (300 aa).

S-adenosyl-L-methionine contacts are provided by residues 33–35, D53, F78, D97, and Q104; that span reads GGH.

Belongs to the methyltransferase superfamily. RsmH family.

Its subcellular location is the cytoplasm. The catalysed reaction is cytidine(1402) in 16S rRNA + S-adenosyl-L-methionine = N(4)-methylcytidine(1402) in 16S rRNA + S-adenosyl-L-homocysteine + H(+). Functionally, specifically methylates the N4 position of cytidine in position 1402 (C1402) of 16S rRNA. The protein is Ribosomal RNA small subunit methyltransferase H of Karelsulcia muelleri (strain GWSS) (Sulcia muelleri).